A 732-amino-acid chain; its full sequence is DNA gyrase subunit B, mitochondrial (732 aa).

The region spanning 513-620 (SEIFIVEGDS…RYQRALFDAG (108 aa)) is the Toprim domain. Mg(2+)-binding residues include glutamate 519, aspartate 593, and aspartate 595.

It belongs to the type II topoisomerase GyrB family. As to quaternary structure, made up of two chains. The A chain is responsible for DNA breakage and rejoining; the B chain catalyzes ATP hydrolysis. It depends on Mg(2+) as a cofactor. The cofactor is Mn(2+). Ca(2+) is required as a cofactor.

It is found in the mitochondrion. It carries out the reaction ATP-dependent breakage, passage and rejoining of double-stranded DNA.. Its function is as follows. A type II topoisomerase that negatively supercoils closed circular double-stranded DNA in an ATP-dependent manner. This is DNA gyrase subunit B, mitochondrial (GYRBM) from Arabidopsis thaliana (Mouse-ear cress).